The sequence spans 535 residues: Beta-glucosidase 47 (535 aa).

An N-terminal signal peptide occupies residues 1 to 38; the sequence is MKKSIVYEIMETKSSMYLSQFRLWLCFIITTLVSLSSS. Q73 is an a beta-D-glucoside binding site. N93 carries N-linked (GlcNAc...) asparagine glycosylation. Residues H175 and 220–221 each bind a beta-D-glucoside; that span reads NE. The Proton donor role is filled by E221. A disulfide bridge connects residues C240 and C247. N246 carries an N-linked (GlcNAc...) asparagine glycan. Y363 contacts a beta-D-glucoside. A disulfide bond links C371 and C376. Residue N419 is glycosylated (N-linked (GlcNAc...) asparagine). E426 is a binding site for a beta-D-glucoside. E426 functions as the Nucleophile in the catalytic mechanism. N432 is a glycosylation site (N-linked (GlcNAc...) asparagine). A beta-D-glucoside contacts are provided by residues W470, 477 to 478, and F486; that span reads EW.

It belongs to the glycosyl hydrolase 1 family.

The enzyme catalyses Hydrolysis of terminal, non-reducing beta-D-glucosyl residues with release of beta-D-glucose.. This is Beta-glucosidase 47 from Arabidopsis thaliana (Mouse-ear cress).